Reading from the N-terminus, the 188-residue chain is Adenine phosphoribosyltransferase (188 aa).

It belongs to the purine/pyrimidine phosphoribosyltransferase family. As to quaternary structure, homodimer.

It localises to the cytoplasm. The enzyme catalyses AMP + diphosphate = 5-phospho-alpha-D-ribose 1-diphosphate + adenine. Its pathway is purine metabolism; AMP biosynthesis via salvage pathway; AMP from adenine: step 1/1. Catalyzes a salvage reaction resulting in the formation of AMP, that is energically less costly than de novo synthesis. The sequence is that of Adenine phosphoribosyltransferase from Burkholderia lata (strain ATCC 17760 / DSM 23089 / LMG 22485 / NCIMB 9086 / R18194 / 383).